Here is a 78-residue protein sequence, read N- to C-terminus: Cytochrome c-551 (78 aa).

Heme c-binding residues include C14, C17, H18, and M55.

In terms of processing, binds 1 heme c group covalently per subunit.

This is Cytochrome c-551 from Halorhodospira halophila (Ectothiorhodospira halophila).